The sequence spans 298 residues: Ribosomal RNA small subunit methyltransferase H (298 aa).

S-adenosyl-L-methionine contacts are provided by residues 46–48, Asp65, Phe92, Asp108, and His115; that span reads GGH.

It belongs to the methyltransferase superfamily. RsmH family.

The protein resides in the cytoplasm. The enzyme catalyses cytidine(1402) in 16S rRNA + S-adenosyl-L-methionine = N(4)-methylcytidine(1402) in 16S rRNA + S-adenosyl-L-homocysteine + H(+). Its function is as follows. Specifically methylates the N4 position of cytidine in position 1402 (C1402) of 16S rRNA. In Nostoc punctiforme (strain ATCC 29133 / PCC 73102), this protein is Ribosomal RNA small subunit methyltransferase H.